The chain runs to 331 residues: Inner membrane ABC transporter permease protein YjfF (331 aa).

The Cytoplasmic portion of the chain corresponds to 1 to 5; the sequence is MIKRN. The chain crosses the membrane as a helical span at residues 6-26; sequence LPLMITIGVFVLGYLYCLTQF. At 27–42 the chain is on the periplasmic side; the sequence is PGFASTRVICNILTDN. Residues 43–63 form a helical membrane-spanning segment; the sequence is AFLGIIAVGMTFVILSGGIDL. The Cytoplasmic portion of the chain corresponds to 64–88; the sequence is SVGSVIAFTGVFLAKVIGDFGLSPL. The chain crosses the membrane as a helical span at residues 89–109; it reads LAFPLVLVMGCAFGAFMGLLI. Over 110-113 the chain is Periplasmic; it reads DALK. A helical transmembrane segment spans residues 114–134; sequence IPAFIITLAGMFFLRGVSYLV. Over 135–159 the chain is Cytoplasmic; the sequence is SEESIPINHPIYDTLSSLAWKIPGG. The helical transmembrane segment at 160–180 threads the bilayer; sequence GRLSAMGLLMLAVVVIGIFLA. Residues 181–222 lie on the Periplasmic side of the membrane; the sequence is HRTRFGNQVYAIGGNATSANLMGISTRSTTIRIYMLSTGLAT. Residues 223–243 form a helical membrane-spanning segment; the sequence is LAGIVFSIYTQAGYALAGVGV. The Cytoplasmic portion of the chain corresponds to 244-250; it reads ELDAIAS. A helical membrane pass occupies residues 251-271; it reads VVIGGTLLSGGVGTVLGTLFG. Over 272 to 294 the chain is Periplasmic; that stretch reads VAIQGLIQTYINFDGTLSSWWTK. A helical transmembrane segment spans residues 295–315; sequence IAIGILLFIFIALQRGLTVLW. Residues 316 to 331 lie on the Cytoplasmic side of the membrane; it reads ENRQSSPVTRVNIAQQ.

It belongs to the binding-protein-dependent transport system permease family. AraH/RbsC subfamily. In terms of assembly, the complex is composed of two ATP-binding proteins (YtfR), two transmembrane proteins (YtfT and YjfF) and a solute-binding protein (YtfQ).

It is found in the cell inner membrane. Functionally, part of the ABC transporter complex YtfQRT-YjfF involved in galactofuranose transport. Probably responsible for the translocation of the substrate across the membrane. This is Inner membrane ABC transporter permease protein YjfF (yjfF) from Escherichia coli (strain K12).